The primary structure comprises 310 residues: Oxygen-dependent coproporphyrinogen-III oxidase (310 aa).

Residue Ser92 participates in substrate binding. 2 residues coordinate a divalent metal cation: His96 and His106. His106 serves as the catalytic Proton donor. 108–110 (NVR) contributes to the substrate binding site. Residues His145 and His175 each coordinate a divalent metal cation. Positions 240–275 (YVEFNLIWDRGTLFGLQSGGRTESILMSMPPLARWE) are important for dimerization. 258-260 (GGR) contributes to the substrate binding site.

Belongs to the aerobic coproporphyrinogen-III oxidase family. As to quaternary structure, homodimer. A divalent metal cation serves as cofactor.

Its subcellular location is the cytoplasm. The enzyme catalyses coproporphyrinogen III + O2 + 2 H(+) = protoporphyrinogen IX + 2 CO2 + 2 H2O. It functions in the pathway porphyrin-containing compound metabolism; protoporphyrin-IX biosynthesis; protoporphyrinogen-IX from coproporphyrinogen-III (O2 route): step 1/1. In terms of biological role, involved in the heme biosynthesis. Catalyzes the aerobic oxidative decarboxylation of propionate groups of rings A and B of coproporphyrinogen-III to yield the vinyl groups in protoporphyrinogen-IX. This chain is Oxygen-dependent coproporphyrinogen-III oxidase, found in Pectobacterium carotovorum subsp. carotovorum (strain PC1).